We begin with the raw amino-acid sequence, 563 residues long: Delta-1-pyrroline-5-carboxylate dehydrogenase, mitochondrial (563 aa).

Residues 1-24 (MLLPAPALRRALLSRPWTGAGLRW) constitute a mitochondrion transit peptide. Lys31 is subject to N6-succinyllysine. Ser44 carries the post-translational modification Phosphoserine. Lys52 carries the N6-acetyllysine modification. N6-acetyllysine; alternate occurs at positions 93, 99, 114, 130, and 175. N6-succinyllysine; alternate occurs at positions 93, 99, 114, 130, and 175. Residues Ser208, Lys233, and 286–290 (GSVPT) each bind NAD(+). Residue Glu314 is the Proton acceptor of the active site. An N6-acetyllysine modification is found at Lys318. At Lys347 the chain carries N6-succinyllysine. The active-site Nucleophile is Cys348. Residues Lys365 and Lys376 each carry the N6-acetyllysine modification. The residue at position 395 (Lys395) is an N6-succinyllysine. An NAD(+)-binding site is contributed by Glu447. Lys462 is modified (N6-acetyllysine). Lys509 is modified (N6-acetyllysine; alternate). Lys509 carries the post-translational modification N6-succinyllysine; alternate. Ser513 lines the substrate pocket. N6-acetyllysine occurs at positions 531 and 552.

The protein belongs to the aldehyde dehydrogenase family. As to quaternary structure, homodimer. As to expression, highest expression is found in liver followed by skeletal muscle, kidney, heart, brain, placenta, lung and pancreas.

It localises to the mitochondrion matrix. It carries out the reaction L-glutamate 5-semialdehyde + NAD(+) + H2O = L-glutamate + NADH + 2 H(+). It participates in amino-acid degradation; L-proline degradation into L-glutamate; L-glutamate from L-proline: step 2/2. In terms of biological role, irreversible conversion of delta-1-pyrroline-5-carboxylate (P5C), derived either from proline or ornithine, to glutamate. This is a necessary step in the pathway interconnecting the urea and tricarboxylic acid cycles. The preferred substrate is glutamic gamma-semialdehyde, other substrates include succinic, glutaric and adipic semialdehydes. The chain is Delta-1-pyrroline-5-carboxylate dehydrogenase, mitochondrial (ALDH4A1) from Homo sapiens (Human).